The chain runs to 229 residues: Urease accessory protein UreF (229 aa).

The protein belongs to the UreF family. As to quaternary structure, ureD, UreF and UreG form a complex that acts as a GTP-hydrolysis-dependent molecular chaperone, activating the urease apoprotein by helping to assemble the nickel containing metallocenter of UreC. The UreE protein probably delivers the nickel.

It localises to the cytoplasm. In terms of biological role, required for maturation of urease via the functional incorporation of the urease nickel metallocenter. The polypeptide is Urease accessory protein UreF (Staphylococcus aureus (strain MRSA252)).